Consider the following 691-residue polypeptide: Elongation factor G (691 aa).

One can recognise a tr-type G domain in the interval 12 to 286; that stretch reads KKLRNIGIMA…GILEYLPSPL (275 aa). Residues 21-28, 85-89, and 139-142 each bind GTP; these read AHIDAGKT, DTPGH, and NKMD.

This sequence belongs to the TRAFAC class translation factor GTPase superfamily. Classic translation factor GTPase family. EF-G/EF-2 subfamily.

Its subcellular location is the cytoplasm. In terms of biological role, catalyzes the GTP-dependent ribosomal translocation step during translation elongation. During this step, the ribosome changes from the pre-translocational (PRE) to the post-translocational (POST) state as the newly formed A-site-bound peptidyl-tRNA and P-site-bound deacylated tRNA move to the P and E sites, respectively. Catalyzes the coordinated movement of the two tRNA molecules, the mRNA and conformational changes in the ribosome. This chain is Elongation factor G, found in Thermosipho africanus (strain TCF52B).